A 453-amino-acid chain; its full sequence is Probable phenylalanine--tRNA ligase, mitochondrial (453 aa).

The transit peptide at 1–27 (MLLTLRVQGARHWLKSTRCLASSAAPA) directs the protein to the mitochondrion. Residues 142-145 (TAHQ), Arg-164, 171-173 (THY), 178-180 (QAD), Glu-285, and Phe-310 contribute to the substrate site. Positions 356-453 (SHYPQCTNDL…SVDSFNVQIR (98 aa)) constitute an FDX-ACB domain.

Belongs to the class-II aminoacyl-tRNA synthetase family.

The protein localises to the mitochondrion matrix. It carries out the reaction tRNA(Phe) + L-phenylalanine + ATP = L-phenylalanyl-tRNA(Phe) + AMP + diphosphate + H(+). Functionally, is responsible for the charging of tRNA(Phe) with phenylalanine in mitochondrial translation. In Drosophila melanogaster (Fruit fly), this protein is Probable phenylalanine--tRNA ligase, mitochondrial.